Reading from the N-terminus, the 469-residue chain is MTSQLHKKGEAWSARFSEPMSELVKRYTSSVFFDKRLALVDIAGSLAHANMLAAQKIINADDLAAIERGMAQIKGEIERGEFEWQLDLEDVHLNIEARLTALIGDAGKRLHTGRSRNDQVATDIRLWLRGEIDRIGGLLNDLRGALIDLAEQNADTIMPGFTHLQVAQPVTFGHHLLAYVEMFTRDAERMRDCRTRVNRLPLGAAALAGTSYPIDRHAVAKTLGFDGICANSLDAVSDRDFAIEFTAASALVMTHVSRFSEELVLWMSPRVGFIDIADRFCTGSSIMPQKKNPDVPELARGKTGRVNGHLMALLTLMKGQPLAYNKDNQEDKEPLFDTVDTVADTLRIFAEMVAGITVKPDAMRAAALQGFSTATDLADYLVKRGLPFRDAHEAVAHAVKICDDRGIDLADLTLDEMKQELPNVAHLIGDDVFGYLTLEGSVASRNHPGGTSPDQVRAAVKAARAALAK.

The protein belongs to the lyase 1 family. Argininosuccinate lyase subfamily.

The protein resides in the cytoplasm. It catalyses the reaction 2-(N(omega)-L-arginino)succinate = fumarate + L-arginine. It participates in amino-acid biosynthesis; L-arginine biosynthesis; L-arginine from L-ornithine and carbamoyl phosphate: step 3/3. The chain is Argininosuccinate lyase from Burkholderia cenocepacia (strain HI2424).